The primary structure comprises 266 residues: Energy-coupling factor transporter ATP-binding protein EcfA1 (266 aa).

One can recognise an ABC transporter domain in the interval 2-237 (IKLNNVTFRY…EKIIEIAKIA (236 aa)). 37 to 44 (GHNGSGKS) is an ATP binding site.

The protein belongs to the ABC transporter superfamily. Energy-coupling factor EcfA family. As to quaternary structure, forms a stable energy-coupling factor (ECF) transporter complex composed of 2 membrane-embedded substrate-binding proteins (S component), 2 ATP-binding proteins (A component) and 2 transmembrane proteins (T component).

It is found in the cell membrane. Its function is as follows. ATP-binding (A) component of a common energy-coupling factor (ECF) ABC-transporter complex. Unlike classic ABC transporters this ECF transporter provides the energy necessary to transport a number of different substrates. The sequence is that of Energy-coupling factor transporter ATP-binding protein EcfA1 from Mycoplasmopsis synoviae (strain 53) (Mycoplasma synoviae).